The sequence spans 293 residues: Phosphate-binding protein PstS 2 (293 aa).

A signal peptide spans 1–23 (MKKHKMLSLLAVSGLMGIGILAG). Cysteine 24 carries N-palmitoyl cysteine lipidation. A lipid anchor (S-diacylglycerol cysteine) is attached at cysteine 24.

The protein belongs to the PstS family. As to quaternary structure, the complex is composed of two ATP-binding proteins (PstB), two transmembrane proteins (PstC and PstA) and a solute-binding protein (PstS).

Its subcellular location is the cell membrane. Part of the ABC transporter complex PstSACB involved in phosphate import. The sequence is that of Phosphate-binding protein PstS 2 (pstS2) from Streptococcus agalactiae serotype III (strain NEM316).